A 172-amino-acid chain; its full sequence is Large ribosomal subunit protein uL10 (172 aa).

It belongs to the universal ribosomal protein uL10 family. As to quaternary structure, part of the ribosomal stalk of the 50S ribosomal subunit. The N-terminus interacts with L11 and the large rRNA to form the base of the stalk. The C-terminus forms an elongated spine to which L12 dimers bind in a sequential fashion forming a multimeric L10(L12)X complex.

Forms part of the ribosomal stalk, playing a central role in the interaction of the ribosome with GTP-bound translation factors. The sequence is that of Large ribosomal subunit protein uL10 from Clostridium tetani (strain Massachusetts / E88).